The chain runs to 123 residues: Small ribosomal subunit protein uS12 (123 aa).

Asp-89 carries the post-translational modification 3-methylthioaspartic acid.

This sequence belongs to the universal ribosomal protein uS12 family. As to quaternary structure, part of the 30S ribosomal subunit. Contacts proteins S8 and S17. May interact with IF1 in the 30S initiation complex.

Its function is as follows. With S4 and S5 plays an important role in translational accuracy. In terms of biological role, interacts with and stabilizes bases of the 16S rRNA that are involved in tRNA selection in the A site and with the mRNA backbone. Located at the interface of the 30S and 50S subunits, it traverses the body of the 30S subunit contacting proteins on the other side and probably holding the rRNA structure together. The combined cluster of proteins S8, S12 and S17 appears to hold together the shoulder and platform of the 30S subunit. This chain is Small ribosomal subunit protein uS12, found in Rhizobium meliloti (strain 1021) (Ensifer meliloti).